Consider the following 515-residue polypeptide: Probable malate:quinone oxidoreductase (515 aa).

It belongs to the MQO family. FAD serves as cofactor.

It catalyses the reaction (S)-malate + a quinone = a quinol + oxaloacetate. The protein operates within carbohydrate metabolism; tricarboxylic acid cycle; oxaloacetate from (S)-malate (quinone route): step 1/1. The sequence is that of Probable malate:quinone oxidoreductase from Blochmanniella pennsylvanica (strain BPEN).